Consider the following 274-residue polypeptide: 3-methyl-2-oxobutanoate hydroxymethyltransferase (274 aa).

Mg(2+) contacts are provided by D50 and D89. 3-methyl-2-oxobutanoate contacts are provided by residues D50–S51, D89, and K119. E121 is a Mg(2+) binding site. The active-site Proton acceptor is E188.

The protein belongs to the PanB family. In terms of assembly, homodecamer; pentamer of dimers. Mg(2+) serves as cofactor.

The protein resides in the cytoplasm. The enzyme catalyses 3-methyl-2-oxobutanoate + (6R)-5,10-methylene-5,6,7,8-tetrahydrofolate + H2O = 2-dehydropantoate + (6S)-5,6,7,8-tetrahydrofolate. It functions in the pathway cofactor biosynthesis; (R)-pantothenate biosynthesis; (R)-pantoate from 3-methyl-2-oxobutanoate: step 1/2. Its function is as follows. Catalyzes the reversible reaction in which hydroxymethyl group from 5,10-methylenetetrahydrofolate is transferred onto alpha-ketoisovalerate to form ketopantoate. The chain is 3-methyl-2-oxobutanoate hydroxymethyltransferase from Methylorubrum populi (strain ATCC BAA-705 / NCIMB 13946 / BJ001) (Methylobacterium populi).